Reading from the N-terminus, the 155-residue chain is Small ribosomal subunit protein uS7c (155 aa).

It belongs to the universal ribosomal protein uS7 family. Part of the 30S ribosomal subunit.

The protein resides in the plastid. Its subcellular location is the chloroplast. Its function is as follows. One of the primary rRNA binding proteins, it binds directly to 16S rRNA where it nucleates assembly of the head domain of the 30S subunit. The protein is Small ribosomal subunit protein uS7c (rps7) of Metasequoia glyptostroboides (Dawn redwood).